The primary structure comprises 957 residues: Collagen alpha-1(XXI) chain (957 aa).

The signal sequence occupies residues 1–22 (MAHYITFLCMVLVLLLQNSVLA). The VWFA domain occupies 37-211 (DLVFILDGSY…KIREVMKQKL (175 aa)). The N-linked (GlcNAc...) asparagine glycan is linked to N62. In terms of domain architecture, Laminin G-like spans 230–412 (GFDILLGLDV…VQKLRIYCDP (183 aa)). Collagen-like domains follow at residues 448-500 (PGKP…GARG), 501-542 (LPGY…GDKG), and 543-594 (SPGF…SPGA). 2 disordered regions span residues 448–786 (PGKP…KPGR) and 825–938 (GSPG…ICDP). Low complexity-rich tracts occupy residues 451–462 (PGLQGPKGDPGL) and 471–481 (QPGQDGKPGYQ). Residues 507–517 (EPGRDGDKGDR) show a composition bias toward basic and acidic residues. Composition is skewed to low complexity over residues 618–637 (QKGEIGPPGQQGKKGAPGMP) and 705–729 (EKGIQGQKGENGRQGIPGQQGIQGH). Collagen-like domains are found at residues 681–733 (SPGE…HGAK), 734–787 (GERG…PGRE), 825–882 (GSPG…GSQG), and 884–934 (GYPG…GPPG). Over residues 732–742 (AKGERGEKGEP) the composition is skewed to basic and acidic residues. Pro residues predominate over residues 829–838 (IPGPPGPIGP). Over residues 839 to 874 (EGPRGLPGLPGRDGVPGLVGVPGRPGVRGLKGLPGR) the composition is skewed to low complexity. Over residues 889–900 (QGPPGPPGPEGP) the composition is skewed to pro residues.

Belongs to the fibril-associated collagens with interrupted helices (FACIT) family. Highly expressed in lymph node, jejunum, pancreas, stomach, trachea, testis, uterus and placenta; moderately expressed in brain, colon, lung, prostate, spinal cord, salivary gland and vascular smooth-muscle cells and very weakly expressed in heart, liver, kidney, bone marrow, spleen, thymus, skeletal muscle, adrenal gland and peripheral leukocytes. Expression in heart was higher in the right ventricle and atrium than in the left ventricle and atrium.

It localises to the secreted. It is found in the extracellular space. The protein localises to the extracellular matrix. The protein resides in the cytoplasm. The sequence is that of Collagen alpha-1(XXI) chain (COL21A1) from Homo sapiens (Human).